The chain runs to 389 residues: Phosphoglycerate kinase (389 aa).

Substrate contacts are provided by residues 21 to 23, Arg-36, 59 to 62, Arg-112, and Arg-145; these read DLN and HLGR. ATP contacts are provided by residues Lys-196, Glu-318, and 344–347; that span reads GGDS.

The protein belongs to the phosphoglycerate kinase family. Monomer.

The protein resides in the cytoplasm. The enzyme catalyses (2R)-3-phosphoglycerate + ATP = (2R)-3-phospho-glyceroyl phosphate + ADP. It participates in carbohydrate degradation; glycolysis; pyruvate from D-glyceraldehyde 3-phosphate: step 2/5. The polypeptide is Phosphoglycerate kinase (Desulfovibrio desulfuricans (strain ATCC 27774 / DSM 6949 / MB)).